We begin with the raw amino-acid sequence, 322 residues long: Deoxyhypusine hydroxylase (322 aa).

Fe cation-binding residues include His-78, Glu-79, His-111, and Glu-112. HEAT-like PBS-type repeat units lie at residues 109–135, 203–229, 234–260, and 267–293; these read VRHEAAEALGALGDKDSLEDLEKCLKN, LRYRAMFRLRDIGTDEAVLALASGFND, FKHEIAYVFGQMGSTAAVPSLTEVLGR, and VRHEAAEALGAIASEDALPILKQYLND. The Fe cation site is built by His-236, Glu-237, His-269, and Glu-270.

It belongs to the deoxyhypusine hydroxylase family. Fe(2+) is required as a cofactor.

The protein localises to the cytoplasm. Its subcellular location is the nucleus. The enzyme catalyses [eIF5A protein]-deoxyhypusine + AH2 + O2 = [eIF5A protein]-hypusine + A + H2O. It functions in the pathway protein modification; eIF5A hypusination. Its function is as follows. Catalyzes the hydroxylation of the N(6)-(4-aminobutyl)-L-lysine intermediate to form hypusine, an essential post-translational modification only found in mature eIF-5A factor. The polypeptide is Deoxyhypusine hydroxylase (Candida glabrata (strain ATCC 2001 / BCRC 20586 / JCM 3761 / NBRC 0622 / NRRL Y-65 / CBS 138) (Yeast)).